The following is a 316-amino-acid chain: Transaldolase (316 aa).

Lysine 131 serves as the catalytic Schiff-base intermediate with substrate.

This sequence belongs to the transaldolase family. Type 1 subfamily. In terms of assembly, homodimer.

The protein resides in the cytoplasm. It catalyses the reaction D-sedoheptulose 7-phosphate + D-glyceraldehyde 3-phosphate = D-erythrose 4-phosphate + beta-D-fructose 6-phosphate. Its pathway is carbohydrate degradation; pentose phosphate pathway; D-glyceraldehyde 3-phosphate and beta-D-fructose 6-phosphate from D-ribose 5-phosphate and D-xylulose 5-phosphate (non-oxidative stage): step 2/3. In terms of biological role, transaldolase is important for the balance of metabolites in the pentose-phosphate pathway. The sequence is that of Transaldolase from Chromohalobacter salexigens (strain ATCC BAA-138 / DSM 3043 / CIP 106854 / NCIMB 13768 / 1H11).